Consider the following 183-residue polypeptide: ER membrane protein complex subunit 4 (183 aa).

N-acetylthreonine is present on Thr2. Topologically, residues 2–66 (TAQGGLVANR…VQETDRILVE (65 aa)) are cytoplasmic. The disordered stretch occupies residues 20–39 (ELSGPGGGSRGRSDRGSGQG). The residue at position 36 (Ser36) is a Phosphoserine. Residues 67-87 (KRCWDIALGPLKQIPMNLFIM) form a helical membrane-spanning segment. Topologically, residues 88-98 (YMAGNTISIFP) are lumenal. A helical membrane pass occupies residues 99-120 (TMMVCMMAWRPIQALMAISATF). Residues 121-127 (KMLESSS) are Cytoplasmic-facing. Residues 128 to 148 (QKFLQGLVYLIGNLMGLALAV) form a helical membrane-spanning segment. Over 149–183 (YKCQSMGLLPTHASDWLAFIEPPERMEFSGGGLLL) the chain is Lumenal.

It belongs to the EMC4 family. Component of the ER membrane protein complex (EMC). Isoform 1 is expressed in brain and heart. Isoform 2 is expressed in heart.

The protein resides in the endoplasmic reticulum membrane. Part of the endoplasmic reticulum membrane protein complex (EMC) that enables the energy-independent insertion into endoplasmic reticulum membranes of newly synthesized membrane proteins. Preferentially accommodates proteins with transmembrane domains that are weakly hydrophobic or contain destabilizing features such as charged and aromatic residues. Involved in the cotranslational insertion of multi-pass membrane proteins in which stop-transfer membrane-anchor sequences become ER membrane spanning helices. It is also required for the post-translational insertion of tail-anchored/TA proteins in endoplasmic reticulum membranes. By mediating the proper cotranslational insertion of N-terminal transmembrane domains in an N-exo topology, with translocated N-terminus in the lumen of the ER, controls the topology of multi-pass membrane proteins like the G protein-coupled receptors. By regulating the insertion of various proteins in membranes, it is indirectly involved in many cellular processes. The sequence is that of ER membrane protein complex subunit 4 (EMC4) from Homo sapiens (Human).